The chain runs to 68 residues: Conotoxin TsMMSK-021 (68 aa).

A signal peptide spans Met1–Ala20. Residues Val21 to Arg52 constitute a propeptide that is removed on maturation. 3 disulfides stabilise this stretch: Cys53–Cys66, Cys54–Cys62, and Cys58–Cys65. At Pro64 the chain carries 4-hydroxyproline.

Belongs to the conotoxin M superfamily. As to expression, expressed by the venom duct.

The protein resides in the secreted. The polypeptide is Conotoxin TsMMSK-021 (Conus tessulatus (Tessellate cone)).